Here is a 306-residue protein sequence, read N- to C-terminus: UDP-N-acetylenolpyruvoylglucosamine reductase (306 aa).

The 166-residue stretch at lysine 28–glycine 193 folds into the FAD-binding PCMH-type domain. Arginine 172 is an active-site residue. Catalysis depends on serine 222, which acts as the Proton donor. Glutamate 292 is a catalytic residue.

The protein belongs to the MurB family. It depends on FAD as a cofactor.

The protein localises to the cytoplasm. It carries out the reaction UDP-N-acetyl-alpha-D-muramate + NADP(+) = UDP-N-acetyl-3-O-(1-carboxyvinyl)-alpha-D-glucosamine + NADPH + H(+). It participates in cell wall biogenesis; peptidoglycan biosynthesis. Its function is as follows. Cell wall formation. This Streptococcus mutans serotype c (strain ATCC 700610 / UA159) protein is UDP-N-acetylenolpyruvoylglucosamine reductase.